The following is a 1011-amino-acid chain: E3 ubiquitin-protein ligase mib1 (1011 aa).

The MIB/HERC2 1 domain occupies 6 to 74 (NNRVMVEGVG…AYDLRIMDSA (69 aa)). A ZZ-type zinc finger spans residues 80–132 (HDGTMCDTCRQQPIIGIRWKCAECTNYDLCTVCYHGDKHHLRHRFYRITTPGS). Zn(2+)-binding residues include cysteine 85, cysteine 88, cysteine 100, cysteine 103, cysteine 109, cysteine 112, histidine 118, and histidine 122. The 79-residue stretch at 143–221 (SKKITARGIF…MSDLKCVQDA (79 aa)) folds into the MIB/HERC2 2 domain. ANK repeat units follow at residues 430-460 (DLNEELVKAAANGDVAKVDDLLKRQDVDVNG), 463-492 (AGHTAMQAASQNGHVDILKLLLKHSVDVEA), 496-525 (DGDRAVHHAAFGDEGTVIEVLQRGGADLNA), 529-558 (RRQTPLHIAVNKGHLQVVKKLLDFSCHPSL), 562-591 (EGDTPLHDAISKKRDDILAVLLEAGADVTI), 595-627 (NGFNALHHAALRGNPSAMRVLLSKLPRPWIVDE), 631-661 (DGYTALHLAALNNHVEVAELLVHQGSANLDI), 665-694 (NQQTALHLAVERQHTQIVRLLVRAEAKLDI), and 698-729 (DGDTPLHEALRHHTLSQLRQLQDMQDVGKVDT). 2 consecutive RING-type zinc fingers follow at residues 820-855 (CMVCSDLKRDTLFGPCGHIATCSLCSPRVKKCLLCK) and 867-902 (CVVCSDKKAAVLFQPCGHMCACENCASLMKKCVQCR). Positions 936 to 963 (QKDKDNTNVNADVQKLQQQLQDIKEQTM) form a coiled coil. The RING-type 3 zinc-finger motif lies at 964 to 997 (CPVCLDRLKNMIFMCGHGTCQLCGDRMSECPICR).

The protein localises to the cytoplasm. Its subcellular location is the cytoskeleton. The protein resides in the microtubule organizing center. It localises to the centrosome. It is found in the centriolar satellite. The enzyme catalyses S-ubiquitinyl-[E2 ubiquitin-conjugating enzyme]-L-cysteine + [acceptor protein]-L-lysine = [E2 ubiquitin-conjugating enzyme]-L-cysteine + N(6)-ubiquitinyl-[acceptor protein]-L-lysine.. Its pathway is protein modification; protein ubiquitination. Functionally, E3 ubiquitin-protein ligase that mediates ubiquitination of Delta receptors, which act as ligands of Notch proteins. Positively regulates the Delta-mediated Notch signaling by ubiquitinating the intracellular domain of Delta, leading to endocytosis of Delta receptors. This chain is E3 ubiquitin-protein ligase mib1 (mib1), found in Xenopus laevis (African clawed frog).